The chain runs to 275 residues: 2,3,4,5-tetrahydropyridine-2,6-dicarboxylate N-succinyltransferase (275 aa).

Substrate contacts are provided by arginine 108 and aspartate 145.

Belongs to the transferase hexapeptide repeat family. Homotrimer.

Its subcellular location is the cytoplasm. It catalyses the reaction (S)-2,3,4,5-tetrahydrodipicolinate + succinyl-CoA + H2O = (S)-2-succinylamino-6-oxoheptanedioate + CoA. It participates in amino-acid biosynthesis; L-lysine biosynthesis via DAP pathway; LL-2,6-diaminopimelate from (S)-tetrahydrodipicolinate (succinylase route): step 1/3. The sequence is that of 2,3,4,5-tetrahydropyridine-2,6-dicarboxylate N-succinyltransferase from Roseobacter denitrificans (strain ATCC 33942 / OCh 114) (Erythrobacter sp. (strain OCh 114)).